A 268-amino-acid polypeptide reads, in one-letter code: Hydroxyethylthiazole kinase (268 aa).

Methionine 49 lines the substrate pocket. 2 residues coordinate ATP: lysine 124 and threonine 168. Substrate is bound at residue alanine 195.

Belongs to the Thz kinase family. The cofactor is Mg(2+).

The catalysed reaction is 5-(2-hydroxyethyl)-4-methylthiazole + ATP = 4-methyl-5-(2-phosphooxyethyl)-thiazole + ADP + H(+). The protein operates within cofactor biosynthesis; thiamine diphosphate biosynthesis; 4-methyl-5-(2-phosphoethyl)-thiazole from 5-(2-hydroxyethyl)-4-methylthiazole: step 1/1. Functionally, catalyzes the phosphorylation of the hydroxyl group of 4-methyl-5-beta-hydroxyethylthiazole (THZ). The sequence is that of Hydroxyethylthiazole kinase from Archaeoglobus fulgidus (strain ATCC 49558 / DSM 4304 / JCM 9628 / NBRC 100126 / VC-16).